Consider the following 514-residue polypeptide: Putative fucosyltransferase 10 (514 aa).

Residues Asn-185, Asn-210, Asn-355, Asn-377, and Asn-456 are each glycosylated (N-linked (GlcNAc...) asparagine).

This sequence belongs to the glycosyltransferase 37 family. In terms of tissue distribution, expressed in root, leaves, stems and seedlings.

The protein resides in the golgi apparatus. It participates in protein modification; protein glycosylation. In terms of biological role, may be involved in cell wall biosynthesis. May act as a fucosyltransferase. This Arabidopsis thaliana (Mouse-ear cress) protein is Putative fucosyltransferase 10 (FUT10).